The primary structure comprises 688 residues: Potassium-transporting ATPase ATP-binding subunit (688 aa).

4 consecutive transmembrane segments (helical) span residues valine 35–alanine 55, alanine 62–alanine 82, isoleucine 219–leucine 239, and valine 260–isoleucine 280. Aspartate 313 serves as the catalytic 4-aspartylphosphate intermediate. ATP-binding positions include aspartate 350, glutamate 354, phenylalanine 383–serine 390, and lysine 401. The Mg(2+) site is built by aspartate 524 and aspartate 528. 3 helical membrane-spanning segments follow: residues phenylalanine 594–methionine 614, alanine 622–leucine 642, and glycine 667–leucine 687.

The protein belongs to the cation transport ATPase (P-type) (TC 3.A.3) family. Type IA subfamily. As to quaternary structure, the system is composed of three essential subunits: KdpA, KdpB and KdpC.

It is found in the cell inner membrane. It catalyses the reaction K(+)(out) + ATP + H2O = K(+)(in) + ADP + phosphate + H(+). Part of the high-affinity ATP-driven potassium transport (or Kdp) system, which catalyzes the hydrolysis of ATP coupled with the electrogenic transport of potassium into the cytoplasm. This subunit is responsible for energy coupling to the transport system and for the release of the potassium ions to the cytoplasm. The sequence is that of Potassium-transporting ATPase ATP-binding subunit from Photorhabdus laumondii subsp. laumondii (strain DSM 15139 / CIP 105565 / TT01) (Photorhabdus luminescens subsp. laumondii).